The chain runs to 329 residues: Peroxidase 30 (329 aa).

The first 27 residues, 1-27, serve as a signal peptide directing secretion; that stretch reads MKTMTQLNIAVVVVVTVLIGMLRSSEA. 4 disulfides stabilise this stretch: Cys-38/Cys-116, Cys-71/Cys-76, Cys-122/Cys-324, and Cys-201/Cys-234. His-69 acts as the Proton acceptor in catalysis. The Ca(2+) site is built by Asp-70, Val-73, Gly-75, Asp-77, and Ser-79. N-linked (GlcNAc...) asparagine glycosylation is found at Asn-83 and Asn-155. A disordered region spans residues 141–165; that stretch reads SWSVPTGRRDGRISNKTEATNNIPP. A compositionally biased stretch (polar residues) spans 156–165; sequence KTEATNNIPP. Pro-164 contributes to the substrate binding site. An N-linked (GlcNAc...) asparagine glycan is attached at Asn-169. Heme b is bound at residue His-194. Residue Thr-195 participates in Ca(2+) binding. Asn-210 and Asn-240 each carry an N-linked (GlcNAc...) asparagine glycan. Residues Asp-247, Ser-250, and Asp-255 each coordinate Ca(2+). A glycan (N-linked (GlcNAc...) asparagine) is linked at Asn-290.

It belongs to the peroxidase family. Classical plant (class III) peroxidase subfamily. The cofactor is heme b. It depends on Ca(2+) as a cofactor. Mainly expressed in roots.

The protein resides in the secreted. It carries out the reaction 2 a phenolic donor + H2O2 = 2 a phenolic radical donor + 2 H2O. In terms of biological role, removal of H(2)O(2), oxidation of toxic reductants, biosynthesis and degradation of lignin, suberization, auxin catabolism, response to environmental stresses such as wounding, pathogen attack and oxidative stress. These functions might be dependent on each isozyme/isoform in each plant tissue. This Arabidopsis thaliana (Mouse-ear cress) protein is Peroxidase 30 (PER30).